Here is a 371-residue protein sequence, read N- to C-terminus: DNA replication and repair protein RecF (371 aa).

30 to 37 (GKNGQGKT) provides a ligand contact to ATP.

The protein belongs to the RecF family.

Its subcellular location is the cytoplasm. Functionally, the RecF protein is involved in DNA metabolism; it is required for DNA replication and normal SOS inducibility. RecF binds preferentially to single-stranded, linear DNA. It also seems to bind ATP. This is DNA replication and repair protein RecF from Clostridioides difficile (strain 630) (Peptoclostridium difficile).